The chain runs to 206 residues: Small ribosomal subunit protein uS4 (206 aa).

An S4 RNA-binding domain is found at 96–156 (GRLDNVVYRM…EKAKKQSRVK (61 aa)).

The protein belongs to the universal ribosomal protein uS4 family. Part of the 30S ribosomal subunit. Contacts protein S5. The interaction surface between S4 and S5 is involved in control of translational fidelity.

Its function is as follows. One of the primary rRNA binding proteins, it binds directly to 16S rRNA where it nucleates assembly of the body of the 30S subunit. In terms of biological role, with S5 and S12 plays an important role in translational accuracy. This is Small ribosomal subunit protein uS4 from Cronobacter sakazakii (strain ATCC BAA-894) (Enterobacter sakazakii).